Here is a 126-residue protein sequence, read N- to C-terminus: Holo-[acyl-carrier-protein] synthase (126 aa).

Residues D9 and E58 each coordinate Mg(2+).

Belongs to the P-Pant transferase superfamily. AcpS family. Mg(2+) is required as a cofactor.

The protein localises to the cytoplasm. It catalyses the reaction apo-[ACP] + CoA = holo-[ACP] + adenosine 3',5'-bisphosphate + H(+). Transfers the 4'-phosphopantetheine moiety from coenzyme A to a Ser of acyl-carrier-protein. This is Holo-[acyl-carrier-protein] synthase from Buchnera aphidicola subsp. Acyrthosiphon pisum (strain APS) (Acyrthosiphon pisum symbiotic bacterium).